Here is a 538-residue protein sequence, read N- to C-terminus: Reticuline oxidase (538 aa).

The signal sequence occupies residues 1 to 23 (MENKTPIFFSLSIFLSLLNCALG). Cys-30 and Cys-89 are disulfide-bonded. Asn-38 carries N-linked (GlcNAc...) asparagine glycosylation. The 175-residue stretch at 67 to 241 (LISKPSAIIL…YAWKIKLLPV (175 aa)) folds into the FAD-binding PCMH-type domain. The 6-(S-cysteinyl)-8alpha-(pros-histidyl)-FAD (His-Cys) cross-link spans 104–166 (HSYEGLSYTS…SKLGFTAGWC (63 aa)). N-linked (GlcNAc...) asparagine glycans are attached at residues Asn-423 and Asn-471.

The protein belongs to the oxygen-dependent FAD-linked oxidoreductase family. It depends on FAD as a cofactor. A metal cation is required as a cofactor. The FAD cofactor is bound via a bicovalent 6-S-cysteinyl, 8alpha-N1-histidyl FAD linkage.

It localises to the cytoplasmic vesicle. It catalyses the reaction (S)-reticuline + O2 = (S)-scoulerine + H2O2 + H(+). It functions in the pathway alkaloid biosynthesis; (S)-scoulerine biosynthesis; (S)-scoulerine from (S)-reticuline: step 1/1. Its function is as follows. Essential to the formation of benzophenanthridine alkaloids in the response of plants to pathogenic attack. Catalyzes the stereospecific conversion of the N-methyl moiety of (S)-reticuline into the berberine bridge carbon of (S)-scoulerine. This chain is Reticuline oxidase (BBE1), found in Eschscholzia californica (California poppy).